The following is a 494-amino-acid chain: MVNEISPRTLVLLAVTCSLLVLYFSTRERQPVMPRELPVVKAKSYHFEDIIVEGRKKYPDRPYLAVNNRHSFVVYPPSCFDEIKRLPEHSASAKDFFHTMNAGDWTYVGHETTPLLKTIIADLTRVIPARVNKRQQDTRMAFESIVGYAPEWKEIGLLMTTFEIVAKINACAFVGRELGTNNKWVKAVMQSPLVIHVAVLIMNACPALLRPLLAPLAFLPTKMNQWDMRRLLTPMLQEDMAIFKETKDRSELLRPKQNGKIPLTAMLLSRYKQGEATIRQLIVDYILISFDSTPSTASALYHVICELAAHPEAADVLRQELDEVMVDGKLPQTHLQELKRMDSFLRESFRLHPVSLFSLQRVLAKPVKLSVGPTIPAGAIIAVDAAAINRSPSLWKDPDEFDMNRFHDLRQVPGNENKFHLLNTGSDSPGWGDGTQACPGRFFANSTLKIAFAYILQNYDVKRKEGSSPPKMTPLANGTWAPDDKAAALFKSRN.

A helical transmembrane segment spans residues 5 to 25; that stretch reads ISPRTLVLLAVTCSLLVLYFS. Heme is bound at residue Cys-438. Residues Asn-445 and Asn-477 are each glycosylated (N-linked (GlcNAc...) asparagine).

Belongs to the cytochrome P450 family. Heme is required as a cofactor.

Its subcellular location is the membrane. The protein operates within mycotoxin biosynthesis. In terms of biological role, cytochrome P450 monooxygenase; part of the gene cluster that mediates the biosynthesis of a family of the mycotoxins cytochalasins E and K. The hybrid PKS-NRPS synthetase ccsA and the enoyl reductase ccsC are responsible for fusion of phenylalanine with an octaketide backbone and subsequent release of the stable tetramic acid precursor. The polyketide synthase module (PKS) of the PKS-NRPS ccsA is responsible for the synthesis of the octaketide backbone. The downstream nonribosomal peptide synthetase (NRPS) amidates the carboxyl end of the octaketide with a phenylalanine. A reductase-like domain (R) at the C-terminus catalyzes the reductive release of the polyketide-amino acid intermediate. Because ccsA lacks a designated enoylreductase (ER) domain, the required activity is provided the enoyl reductase ccsC. Upon formation of the 11-membered carbocycle-fused perhydroisoindolone intermediate, a number of oxidative steps are required to afford the final cytochalasin E and K, including two hydroxylations at C17 and C18, one alcohol oxidation at C17, one epoxidation at C6 and C7 and two Baeyer-Villiger oxidations. The oxidative modification at C17, C18 and the C6-C7 epoxidation are likely to be catalyzed by the two cytochrome P450 oxygenases ccsD and ccsG. CcsD may be responsible for the epoxidation of the C6-C7 double bond. CcsG may be responsible for the successive oxidative modifications at C17 and C18. The double Baeyer-Villiger oxidations of ketocytochalasin to precytochalasin and cytochalasin Z(16) are among the final steps leading to cytochalasin E and K and are catalyzed by ccsB. The first oxygen insertion step follows that of the classic BVMO mechanism, generating the ester precytochalasin. Release of precytochalasin into an aqueous environment can generate the shunt product iso-precytochalasin through spontaneous isomerization. Alternatively, precytochalasin can undergo further oxidation by ccsB to yield the in-line carbonate-containing cytochalasin Z(16). Cytochalasin Z(16) is a precursor to cytochalasin E and cytochalasin K, whereas iso-precytochalasin is a precursor to cytochalasin Z(17) and rosellichalasin. The hydrolyase ccsE may catalyze hydrolysis of epoxide bond in cytochalasin E to afford cytochalasin K. The function of ccsF has not been assigned but it may play a role in post-PKS-NRPS biosynthetic step, resistance or transport of cytochalasins and related PKS-NRPS products. In Aspergillus clavatus (strain ATCC 1007 / CBS 513.65 / DSM 816 / NCTC 3887 / NRRL 1 / QM 1276 / 107), this protein is Cytochrome P450 monooxygenase ccsD.